Here is a 45-residue protein sequence, read N- to C-terminus: Photosystem II reaction center protein K (45 aa).

Residues M1–A8 constitute a propeptide that is removed on maturation. Residues L24–F44 traverse the membrane as a helical segment.

Belongs to the PsbK family. As to quaternary structure, PSII is composed of 1 copy each of membrane proteins PsbA, PsbB, PsbC, PsbD, PsbE, PsbF, PsbH, PsbI, PsbJ, PsbK, PsbL, PsbM, PsbT, PsbX, PsbY, PsbZ, Psb30/Ycf12, peripheral proteins PsbO, CyanoQ (PsbQ), PsbU, PsbV and a large number of cofactors. It forms dimeric complexes.

Its subcellular location is the cellular thylakoid membrane. In terms of biological role, one of the components of the core complex of photosystem II (PSII). PSII is a light-driven water:plastoquinone oxidoreductase that uses light energy to abstract electrons from H(2)O, generating O(2) and a proton gradient subsequently used for ATP formation. It consists of a core antenna complex that captures photons, and an electron transfer chain that converts photonic excitation into a charge separation. The protein is Photosystem II reaction center protein K of Microcystis aeruginosa (strain NIES-843 / IAM M-2473).